We begin with the raw amino-acid sequence, 782 residues long: Translation initiation factor IF-2 (782 aa).

The interval 47-196 (DNAIDGTNKK…TPPKPKELPE (150 aa)) is disordered. Residues 53 to 65 (TNKKAEAPKKETT) show a composition bias toward basic and acidic residues. Over residues 66–81 (SNENGNSKGPNKPNMT) the composition is skewed to polar residues. Low complexity-rich tracts occupy residues 82-93 (NSNEKSNKPNNP) and 118-170 (NTSK…NNKG). Residues 283-452 (ERPPVVTIMG…LLVSEVEELK (170 aa)) form the tr-type G domain. The G1 stretch occupies residues 292 to 299 (GHVDHGKT). Position 292–299 (292–299 (GHVDHGKT)) interacts with GTP. The interval 317-321 (GITQH) is G2. Residues 338-341 (DTPG) are G3. GTP-binding positions include 338–342 (DTPGH) and 392–395 (NKID). The tract at residues 392 to 395 (NKID) is G4. The G5 stretch occupies residues 428–430 (SAK).

It belongs to the TRAFAC class translation factor GTPase superfamily. Classic translation factor GTPase family. IF-2 subfamily.

The protein localises to the cytoplasm. One of the essential components for the initiation of protein synthesis. Protects formylmethionyl-tRNA from spontaneous hydrolysis and promotes its binding to the 30S ribosomal subunits. Also involved in the hydrolysis of GTP during the formation of the 70S ribosomal complex. The sequence is that of Translation initiation factor IF-2 from Listeria monocytogenes serotype 4b (strain CLIP80459).